Here is a 492-residue protein sequence, read N- to C-terminus: Glycogen synthase 1 (492 aa).

Lys15 provides a ligand contact to ADP-alpha-D-glucose.

The protein belongs to the glycosyltransferase 1 family. Bacterial/plant glycogen synthase subfamily.

The catalysed reaction is [(1-&gt;4)-alpha-D-glucosyl](n) + ADP-alpha-D-glucose = [(1-&gt;4)-alpha-D-glucosyl](n+1) + ADP + H(+). It participates in glycan biosynthesis; glycogen biosynthesis. Synthesizes alpha-1,4-glucan chains using ADP-glucose. This chain is Glycogen synthase 1, found in Trichormus variabilis (strain ATCC 29413 / PCC 7937) (Anabaena variabilis).